Consider the following 154-residue polypeptide: MGLSDAEWQLVLNVWGKVEADLAGHGQEVLIRLFHTHPETLEKFDKFKHLKSEDEMKASEDLKKHGNTVLTALGAILKKKGHHEAEIKPLAQSHATKHKIPVKYLEFISEAIIHVLHSKHPGDFGADAQAAMSKALELFRNDIAAQYKELGFQG.

The 147-residue stretch at 2 to 148 (GLSDAEWQLV…FRNDIAAQYK (147 aa)) folds into the Globin domain. Ser4 is subject to Phosphoserine. His65 is a binding site for nitrite. His65 serves as a coordination point for O2. Position 68 is a phosphothreonine (Thr68). Heme b is bound at residue His94.

The protein belongs to the globin family. Monomeric.

It is found in the cytoplasm. The protein resides in the sarcoplasm. It carries out the reaction Fe(III)-heme b-[protein] + nitric oxide + H2O = Fe(II)-heme b-[protein] + nitrite + 2 H(+). The enzyme catalyses H2O2 + AH2 = A + 2 H2O. Its function is as follows. Monomeric heme protein which primary function is to store oxygen and facilitate its diffusion within muscle tissues. Reversibly binds oxygen through a pentacoordinated heme iron and enables its timely and efficient release as needed during periods of heightened demand. Depending on the oxidative conditions of tissues and cells, and in addition to its ability to bind oxygen, it also has a nitrite reductase activity whereby it regulates the production of bioactive nitric oxide. Under stress conditions, like hypoxia and anoxia, it also protects cells against reactive oxygen species thanks to its pseudoperoxidase activity. In Oryctolagus cuniculus (Rabbit), this protein is Myoglobin (MB).